The following is a 198-amino-acid chain: Interferon gamma (198 aa).

The N-terminal stretch at 1-23 (MMVSTARAVVCLSLCLCVCQVRG) is a signal peptide. Residues Asn-31, Asn-42, and Asn-174 are each glycosylated (N-linked (GlcNAc...) asparagine). Residues 173-198 (SNNTKMQRRRRRRRRQARKVKTPTRA) are disordered. Residues 178–198 (MQRRRRRRRRQARKVKTPTRA) show a composition bias toward basic residues.

Belongs to the type II (or gamma) interferon family. In terms of assembly, homodimer.

Its subcellular location is the secreted. Cytokine which binds to interferon gamma receptor 1 (ifngr1). Also binds with lower affinity to interferon gamma receptor 1-like (ifngr1l). Has activating effects on macrophages and neutrophils. This chain is Interferon gamma, found in Paralichthys olivaceus (Bastard halibut).